The following is a 537-amino-acid chain: Fucosyltransferase 6 (537 aa).

Over 1–20 (MYHIFQISSEVFRAFGLKMK) the chain is Cytoplasmic. Residues 21–41 (ILLTLVFSGLLIWSVVLVSFS) traverse the membrane as a helical; Signal-anchor for type II membrane protein segment. Residues 42–537 (NDFNNQLLVA…NDGLKLFDEL (496 aa)) are Lumenal-facing. Asn54, Asn231, and Asn378 each carry an N-linked (GlcNAc...) asparagine glycan.

This sequence belongs to the glycosyltransferase 37 family. Expressed in roots and flowers.

The protein localises to the golgi apparatus. Its subcellular location is the golgi stack membrane. It participates in protein modification; protein glycosylation. In terms of biological role, may be involved in cell wall biosynthesis. May act as a fucosyltransferase. This is Fucosyltransferase 6 (FUT6) from Arabidopsis thaliana (Mouse-ear cress).